An 820-amino-acid polypeptide reads, in one-letter code: Crinkler effector protein 108 (820 aa).

A signal peptide spans 1-17 (MVKLYCAVVGVAGSAFS). The segment at 18–55 (VRVDESDTVDDLKDAIKAKKPNDFKDIDADKLELYVAK) is LQLFLAK domain. Residues 58–111 (GVWLTEADVKSGVADITGLVRLEVVRAKLFSVGLSDEVVSEVDAQEEAAGRGPV) are DWL domain. The HVLVXXP motif motif lies at 112–117 (NVLVVV). A Host nuclear localization signal motif is present at residues 118–124 (PMKKRRV). Residues 125–820 (DAGVDEERRF…MHYDDDEADL (696 aa)) form a C-terminal DC effector domain region. 3 N-linked (GlcNAc...) asparagine glycosylation sites follow: N268, N371, and N703. The segment at 754–791 (NINTASFHELRRLEGVGDATAAKIIAERTIRRFSNLED) is hhH DNA-binding domain.

It belongs to the Crinkler effector family.

It is found in the secreted. The protein resides in the host nucleus. Functionally, secreted effector that suppresses plant basal defense and promotes plant susceptibility via targeting promoters of host HSP gene and thus inhibiting their expression. CRN108 binds directly to heat shock elements (HSEs) 5'-GAAnnTTC-3' and interferes with the association of the HSE with the plant heat shock transcription factors, which initializes HSP gene expression in response to stress. The chain is Crinkler effector protein 108 from Phytophthora sojae (Soybean stem and root rot agent).